A 329-amino-acid polypeptide reads, in one-letter code: Epoxide hydrolase (329 aa).

The region spanning 35-308 (PAVLFCHGFP…DNVGHWVQHE (274 aa)) is the AB hydrolase-1 domain. The Nucleophile role is filled by Asp-111. The active-site Proton donor is Tyr-242. The active-site Proton acceptor is His-303.

Belongs to the AB hydrolase superfamily. Epoxide hydrolase family. In terms of assembly, homodimer.

It catalyses the reaction an epoxide + H2O = an ethanediol. It carries out the reaction (R)-styrene oxide + H2O = (R)-styrene glycol. The catalysed reaction is (S)-styrene oxide + H2O = (S)-styrene glycol. The enzyme catalyses 3,4-epoxy-1-cyclohexene + H2O = cyclohex-3-ene-1,2-diol. Catalyzes the hydrolysis of various epoxides into diols. In vitro, shows the strongest activity toward aromatic and cyclic aliphatic epoxide compounds, since it shows strong activity toward (R)-styrene oxide, (S)-styrene oxide, and 3,4-epoxy-1-cyclohexene, but very weak activity toward (R)-epichlorohydrin, (S)-epichlorohydrin, and 1,2-epoxy-9-decene. This chain is Epoxide hydrolase, found in Caballeronia sordidicola (Burkholderia sordidicola).